Reading from the N-terminus, the 435-residue chain is Nuclear hormone receptor family member nhr-28 (435 aa).

The nuclear receptor DNA-binding region spans 5–80; the sequence is KKPCSVCGEA…VGMRKSAVQR (76 aa). 2 NR C4-type zinc fingers span residues 8–28 and 44–63; these read CSVCGEAGDGAHFGAEACRAC and CRAMGACIIQKNVRCMCRAC. The disordered stretch occupies residues 84–106; it reads LFGRQDSSDGSNPRVSPSTSWPM. Over residues 91-104 the composition is skewed to polar residues; that stretch reads SDGSNPRVSPSTSW. The region spanning 113–374 is the NR LBD domain; that stretch reads IEEPGMATLN…ETFYELVSGR (262 aa).

The protein belongs to the nuclear hormone receptor family.

The protein localises to the nucleus. In terms of biological role, orphan nuclear receptor. The polypeptide is Nuclear hormone receptor family member nhr-28 (Caenorhabditis briggsae).